The primary structure comprises 1536 residues: MSQVWHNSNSQSNDVATSNDATGSNERNEKEPSLQGNKPGFVQQQQRITLPSLSALSTKEEDRRDSNGQQALTSHAAHILGYPPPHSNAMPSIATDSALKQPHEYHPRPKSSSSSPSINASLMNAGPAPLPTVGAASFSLSRFDNPLPIKAPVHTEEPKSYNGLQEEEKATQRPQDCKEVPAGVQPADAPDPSSNHADANDDNNNNENSHDEDADYRPLNVKDALSYLEQVKFQFSSRPDIYNLFLDIMKDFKSQAIDTPGVIERVSTLFRGYPILIQGFNTFLPQGYRIECSSNPDDPIRVTTPMGTTTVNNNISPSGRGTTDAQELGSFPESDGNGVQQPSNVPMVPSSVYQSEQNQDQQQSLPLLATSSGLPSIQQPEMPAHRQIPQSQSLVPQEDAKKNVDVEFSQAISYVNKIKTRFADQPDIYKHFLEILQTYQREQKPINEVYAQVTHLFQNAPDLLEDFKKFLPDSSASANQQVQHAQQHAQQQHEAQMHAQAQAQAQAQAQVEQQKQQQQFLYPASGYYGHPSNRGIPQQNLPPIGSFSPPTNGSTVHEAYQDQQHMQPPHFMPLPSIVQHGPNMVHQGIANENPPLSDLRTSLTEQYAPSSIQHQQQHPQSISPIANTQYGDIPVRPEIDLDPSIVPVVPEPTEPIENNISLNEEVTFFEKAKRYIGNKHLYTEFLKILNLYSQDILDLDDLVEKVDFYLGSNKELFTWFKNFVGYQEKTKCIENIVHEKHRLDLDLCEAFGPSYKRLPKSDTFMPCSGRDDMCWEVLNDEWVGHPVWASEDSGFIAHRKNQYEETLFKIEEERHEYDFYIESNLRTIQCLETIVNKIENMTENEKANFKLPPGLGHTSMTIYKKVIRKVYDKERGFEIIDALHEHPAVTAPVVLKRLKQKDEEWRRAQREWNKVWRELEQKVFFKSLDHLGLTFKQADKKLLTTKQLISEISSIKVDQTNKKIHWLTPKPKSQLDFDFPDKNIFYDILCLADTFITHTTAYSNPDKERLKDLLKYFISLFFSISFEKIEESLYSHKQNVSESSGSDDGSSIASRKRPYQQEMSLLDILHRSRYQKLKRSNDEDGKVPQLSEPPEEEPNTIEEEELIDEEAKNPWLTGNLVEEANSQGIIQNRSIFNLFANTNIYIFFRHWTTIYERLLEIKQMNERVTKEINTRSTVTFAKDLDLLSSQLSEMGLDFVGEDAYKQVLRLSRRLINGDLEHQWFEESLRQAYNNKAFKLYTIDKVTQSLVKHAHTLMTDAKTAEIMALFVKDRNASTTSAKDQIIYRLQVRSHMSNTENMFRIEFDKRTLHVSIQYIALDDLTLKEPKADEDKWKYYVTSYALPHPTEGIPHEKLKIPFLERLIEFGQDIDGTEVDEEFSPEGISVSTLKIKIQPITYQLHIENGSYDVFTRKATNKYPTIANDNTQKGMVSQKKELISKFLDCAVGLRNNLDEAQKLSMQKKWENLKDSIAKTSAGNQGIESETEKGKITKQEQSDNLDSSTASVLPASITTVPQDDNIETTGNTESSDKGAKIQ.

Polar residues-rich tracts occupy residues 1-25 and 42-57; these read MSQV…TGSN and VQQQ…SALS. The tract at residues 1-128 is disordered; the sequence is MSQVWHNSNS…NASLMNAGPA (128 aa). The residue at position 137 (Ser-137) is a Phosphoserine. The disordered stretch occupies residues 149-216; that stretch reads IKAPVHTEEP…ENSHDEDADY (68 aa). Positions 166–179 are enriched in basic and acidic residues; the sequence is EEEKATQRPQDCKE. The segment covering 193–207 has biased composition (low complexity); the sequence is SSNHADANDDNNNNE. One can recognise a PAH 1 domain in the interval 217-287; the sequence is RPLNVKDALS…QGFNTFLPQG (71 aa). Phosphothreonine occurs at positions 303 and 304. The segment covering 308–325 has biased composition (polar residues); that stretch reads TTTVNNNISPSGRGTTDA. Residues 308 to 363 are disordered; sequence TTTVNNNISPSGRGTTDAQELGSFPESDGNGVQQPSNVPMVPSSVYQSEQNQDQQQ. Ser-316 bears the Phosphoserine mark. The segment covering 354–363 has biased composition (low complexity); sequence QSEQNQDQQQ. Residues 404–474 form the PAH 2 domain; it reads VDVEFSQAIS…EDFKKFLPDS (71 aa). Disordered regions lie at residues 475–511 and 524–556; these read SASA…QAQV and ASGY…GSTV. A compositionally biased stretch (low complexity) spans 480-511; it reads QQVQHAQQHAQQQHEAQMHAQAQAQAQAQAQV. The region spanning 656 to 727 is the PAH 3 domain; that stretch reads IENNISLNEE…TWFKNFVGYQ (72 aa). Disordered regions lie at residues 1037–1057, 1079–1108, and 1475–1536; these read KQNV…SRKR, RSND…ELID, and SAGN…AKIQ. The segment covering 1041–1051 has biased composition (low complexity); it reads SESSGSDDGSS. Ser-1046 bears the Phosphoserine mark. Positions 1093 to 1108 are enriched in acidic residues; sequence PPEEEPNTIEEEELID. Positions 1484–1495 are enriched in basic and acidic residues; the sequence is ETEKGKITKQEQ. Positions 1496–1527 are enriched in polar residues; sequence SDNLDSSTASVLPASITTVPQDDNIETTGNTE.

As to quaternary structure, component of the RPD3C(L) complex composed of at least ASH1, CTI6, DEP1, PHO23, RPD3, RXT2, RXT3, SAP30, SDS3, SIN3, UME1 and UME6. Component of the RPD3C(S) complex composed of at least EAF3, RCO1, RPD3, SIN3, and UME1. Interacts with ESS1 and STB1.

The protein localises to the nucleus. Catalytic component of the RPD3 histone deacetylase complexes RPD3C(L) and RPD3C(S) responsible for the deacetylation of lysine residues on the N-terminal part of the core histones (H2A, H2B, H3 and H4). Histone deacetylation gives a tag for epigenetic repression and plays an important role in transcriptional regulation, cell cycle progression and developmental events. SIN3 also has a RPD3 independent function required for normal longevity. The polypeptide is Transcriptional regulatory protein SIN3 (SIN3) (Saccharomyces cerevisiae (strain ATCC 204508 / S288c) (Baker's yeast)).